A 105-amino-acid polypeptide reads, in one-letter code: Nitrogen fixation nifHD region GlnB-like protein 1 (105 aa).

It belongs to the P(II) protein family.

Its function is as follows. Could be involved in the regulation of nitrogen fixation. This chain is Nitrogen fixation nifHD region GlnB-like protein 1 (glnBA), found in Methanothermobacter marburgensis (strain ATCC BAA-927 / DSM 2133 / JCM 14651 / NBRC 100331 / OCM 82 / Marburg) (Methanobacterium thermoautotrophicum).